The primary structure comprises 30 residues: uncharacterized protein (30 aa).

This is an uncharacterized protein from Saccharomyces cerevisiae (strain ATCC 204508 / S288c) (Baker's yeast).